The primary structure comprises 122 residues: Large ribosomal subunit protein uL14 (122 aa).

The protein belongs to the universal ribosomal protein uL14 family. In terms of assembly, part of the 50S ribosomal subunit. Forms a cluster with proteins L3 and L19. In the 70S ribosome, L14 and L19 interact and together make contacts with the 16S rRNA in bridges B5 and B8.

Functionally, binds to 23S rRNA. Forms part of two intersubunit bridges in the 70S ribosome. The chain is Large ribosomal subunit protein uL14 from Phytoplasma mali (strain AT).